We begin with the raw amino-acid sequence, 176 residues long: NAD(P)H-quinone oxidoreductase subunit 6, chloroplastic (176 aa).

Transmembrane regions (helical) follow at residues 10–30 (FLLV…VLLP), 32–52 (PIYS…FYIL), 61–81 (AQLL…VMFM), 92–112 (LWTV…ISLI), and 152–172 (FFLP…GAIA).

The protein belongs to the complex I subunit 6 family. In terms of assembly, NDH is composed of at least 16 different subunits, 5 of which are encoded in the nucleus.

Its subcellular location is the plastid. The protein localises to the chloroplast thylakoid membrane. The catalysed reaction is a plastoquinone + NADH + (n+1) H(+)(in) = a plastoquinol + NAD(+) + n H(+)(out). The enzyme catalyses a plastoquinone + NADPH + (n+1) H(+)(in) = a plastoquinol + NADP(+) + n H(+)(out). In terms of biological role, NDH shuttles electrons from NAD(P)H:plastoquinone, via FMN and iron-sulfur (Fe-S) centers, to quinones in the photosynthetic chain and possibly in a chloroplast respiratory chain. The immediate electron acceptor for the enzyme in this species is believed to be plastoquinone. Couples the redox reaction to proton translocation, and thus conserves the redox energy in a proton gradient. The sequence is that of NAD(P)H-quinone oxidoreductase subunit 6, chloroplastic (ndhG) from Nicotiana tabacum (Common tobacco).